The primary structure comprises 345 residues: MYDTIVIGAGQAGISIGYYLKQSDQKFIILDKSHEVGESWKDRYDSLVLFTSRMYSSLPGMHLEGEKHGFPSKNEIVAYLKKYVKKFEIPIQLRTEVISVLKIKNYFLIKTNREEYQTKNLVIATGPFHTPNIPSISKDLSDNINQLHSSQYKNSKQLAYGNVLVVGGGNSGAQIAVELSKERVTYLACSNKLVYFPLMIGKRSIFWWFDKLGVLHASHTSIVGKFIQKKGDPVFGHELKHAIKQKEIILKKRVIAAKQNEIIFKDSSTLEVNNIIWATGFRNPLCWINIKGVLDQEGRIIHHRGVSPVEGLYFIGLPWQHKRGSALLQGVGNDAEYIVKQMNGE.

The protein resides in the cell membrane. In terms of biological role, involved in potassium and divalent cation transport. Enhances the transport activity of the cation/potassium transporter CzcD. This is an uncharacterized protein from Bacillus subtilis (strain 168).